Reading from the N-terminus, the 143-residue chain is Transcriptional regulator MraZ (143 aa).

SpoVT-AbrB domains lie at 5-47 (EYEH…PMPV) and 76-119 (ASDL…SAER).

The protein belongs to the MraZ family. Forms oligomers.

The protein resides in the cytoplasm. It is found in the nucleoid. This is Transcriptional regulator MraZ from Herpetosiphon aurantiacus (strain ATCC 23779 / DSM 785 / 114-95).